A 262-amino-acid chain; its full sequence is Flap endonuclease Xni (262 aa).

Residue Asp-105 coordinates Mg(2+). The 96-residue stretch at 162-257 folds into the 5'-3' exonuclease domain; it reads ERSQFLDLMA…FRVIDSPPEK (96 aa). Residues Leu-172, Ala-173, Pro-181, Ile-183, and Ile-186 each coordinate K(+). The interaction with DNA stretch occupies residues 185–190; that stretch reads GIGPKS.

Belongs to the Xni family. The cofactor is Mg(2+). Requires K(+) as cofactor.

Has flap endonuclease activity. During DNA replication, flap endonucleases cleave the 5'-overhanging flap structure that is generated by displacement synthesis when DNA polymerase encounters the 5'-end of a downstream Okazaki fragment. This chain is Flap endonuclease Xni, found in Shewanella baltica (strain OS223).